Reading from the N-terminus, the 704-residue chain is D-(-)-3-hydroxybutyrate oligomer hydrolase (704 aa).

A signal peptide spans 1-31; it reads MTTTNRNNLKLTALTAAVLTLSACGGSDAVA. Catalysis depends on Ser-309, which acts as the Charge relay system.

The protein belongs to the D-(-)-3-hydroxybutyrate oligomer hydrolase family.

The protein resides in the secreted. The enzyme catalyses (3R)-hydroxybutanoate dimer + H2O = 2 (R)-3-hydroxybutanoate + H(+). Its pathway is lipid metabolism; butanoate metabolism. Functionally, participates in the degradation of poly-3-hydroxybutyrate (PHB). It works downstream of poly(3-hydroxybutyrate) depolymerase, hydrolyzing D(-)-3-hydroxybutyrate oligomers of various length (3HB-oligomers) into 3HB-monomers. The sequence is that of D-(-)-3-hydroxybutyrate oligomer hydrolase from Albidiferax ferrireducens (strain ATCC BAA-621 / DSM 15236 / T118) (Rhodoferax ferrireducens).